A 186-amino-acid chain; its full sequence is Small ribosomal subunit protein uS5 (186 aa).

Residues 20–83 (FVDKLVHINR…EAAKRDMIFV (64 aa)) enclose the S5 DRBM domain.

Belongs to the universal ribosomal protein uS5 family. As to quaternary structure, part of the 30S ribosomal subunit. Contacts proteins S4 and S8.

Functionally, with S4 and S12 plays an important role in translational accuracy. Its function is as follows. Located at the back of the 30S subunit body where it stabilizes the conformation of the head with respect to the body. The protein is Small ribosomal subunit protein uS5 of Brucella abortus (strain S19).